The primary structure comprises 448 residues: Beclin-1 (448 aa).

Met-1 bears the N-acetylmethionine mark. Phosphoserine is present on residues Ser-14 and Ser-29. Residues 47–72 (TTAQAKPGESQEEEANSGEEPFIETR) form a disordered region. Residues Ser-88, Ser-91, and Ser-94 each carry the phosphoserine; by AMPK modification. The BH3 motif lies at 106–125 (TMENLSRRLKVTGDLFDIMS). Residues 110–157 (LSRRLKVTGDLFDIMSGQTDVDHPLCEECTDTLLDQLDTQLNVTENEC) are interaction with BCL2 and BCL2L1 isoform Bcl-X(L). Phosphothreonine; by DAPK1 is present on Thr-117. A coiled-coil region spans residues 140 to 267 (DTLLDQLDTQ…QLDKLKKTNV (128 aa)). The segment at 243-448 (DELKSVENQM…AWVSSQFYNK (206 aa)) is evolutionary conserved domain (ECD). Residues Lys-400 and Lys-435 each participate in a glycyl lysine isopeptide (Lys-Gly) (interchain with G-Cter in ubiquitin) cross-link. The interval 423 to 448 (WTKALKFMLTNLKWGLAWVSSQFYNK) is required for membrane-association.

It belongs to the beclin family. As to quaternary structure, a homodimeric form is proposed to exist; this metastable form readily transits to ATG14- or UVRAG-containing complexes with BECN1:UVRAG being more stable than BECN1:ATG14. Component of the PI3K (PI3KC3/PI3K-III/class III phosphatidylinositol 3-kinase) complex the core of which is composed of the catalytic subunit PIK3C3, the regulatory subunit PIK3R4 and BECN1 associating with additional regulatory/auxiliary subunits to form alternative complex forms. Alternative complex forms containing a fourth regulatory subunit in a mutually exclusive manner are PI3K complex I (PI3KC3-C1) containing ATG14, and PI3K complex II (PI3KC3-C2) containing UVRAG. PI3KC3-C1 displays a V-shaped architecture with PIK3R4 serving as a bridge between PIK3C3 and the ATG14:BECN1 subcomplex. Both, PI3KC3-C1 and PI3KC3-C2, can associate with further regulatory subunits, such as RUBCN, SH3GLB1/Bif-1 and AMBRA1. PI3KC3-C1 probably associates with PIK3CB. Forms a complex with PPP2CA and AMBRA1; AMBRA1 and BECN1 components of the complex regulate MYC stability via different pathways. Component of the complex, at least composed of LRPPRC, BECN1 and BCL2; the interactions prevent BECN1 from forming an autophagy-inducing complex with PIK3C3. Interacts with AMBRA1, GOPC, GRID2. Interacts with BCL2 and BCL2L1 isoform Bcl-X(L); the interaction inhibits BECN1 function in promoting autophagy by interfering with the formation of the PI3K complex. Interacts with cytosolic HMGB1; inhibits the interaction of BECN1 and BCL2 leading to promotion of autophagy. Interacts with USP10, USP13, DAPK1, RAB39A. Interacts with SLAMF1. Interacts with the poly-Gln domain of ATXN3; the interaction causes deubiquitination at Lys-400 and stabilizes BECN1. Interacts with VMP1. Interacts with TRIM5; the interaction causes activation of BECN1 by causing its dissociation from its inhibitors BCL2 and TAB2. Interacts with active ULK1 (phosphorylated on 'Ser-317') and MEFV simultaneously. Interacts with WDR81 and WDR91; negatively regulates the PI3 kinase/PI3K activity associated with endosomal membranes. Interacts with LAPTM4B; competes with EGFR for LAPTM4B binding; regulates EGFR activity. Interacts with TRIM50. Interacts with TRIM16. Interacts with ATG14; this interaction is increased in the absence of TMEM39A. Interacts with WASHC1; preventing interaction with AMBRA1 and the DCX(AMBRA1) complex and subsequent ubiquitination. Interacts with TRIM17. Interacts with BCL2L10/BCL-B (via BH1 domain). Interacts with SH3BGRL. Interacts with IRGM; enhancing BECN1-interacting partners and influencing the composition of the BECN1 complex. Interacts with ARMC3. Interacts with LRPPRC. In terms of processing, phosphorylation at Thr-117 by DAPK1 reduces its interaction with BCL2 and BCL2L1 and promotes induction of autophagy. In response to autophagic stimuli, phosphorylated at serine residues by AMPK in an ATG14-dependent manner, and this phosphorylation is critical for maximally efficient autophagy. Polyubiquitinated by NEDD4, both with 'Lys-11'- and 'Lys-63'-linkages. 'Lys-11'-linked polyubiquitination leads to degradation and is enhanced when the stabilizing interaction partner VPS34 is depleted. Deubiquitinated by USP10 and USP13, leading to stabilize the PIK3C3/VPS34-containing complexes. Polyubiquitinated at Lys-400 with 'Lys-48'-linkages. 'Lys-48'-linked polyubiquitination of Lys-400 leads to degradation. Deubiquitinated by ATXN3, leading to stabilization. Ubiquitinated at Lys-435 via 'Lys-63'-linkage by the DCX(AMBRA1) complex, thereby increasing the association between BECN1 and PIK3C3 to promote PIK3C3 activity. 'Lys-48'-linked ubiquitination by RNF216 leads to proteasomal degradation and autophagy inhibition. Post-translationally, proteolytically processed by caspases including CASP8 and CASP3; the C-terminal fragments lack autophagy-inducing capacity and are proposed to induce apoptosis. Thus the cleavage is proposed to be an determinant to switch from autophagy to apoptosis pathways affecting cellular homeostasis including viral infections and survival of tumor cells.

It localises to the cytoplasm. The protein localises to the golgi apparatus. The protein resides in the trans-Golgi network membrane. Its subcellular location is the endosome membrane. It is found in the endoplasmic reticulum membrane. It localises to the mitochondrion membrane. The protein localises to the cytoplasmic vesicle. The protein resides in the autophagosome. Its subcellular location is the mitochondrion. It is found in the nucleus. Plays a central role in autophagy. Acts as a core subunit of the PI3K complex that mediates formation of phosphatidylinositol 3-phosphate; different complex forms are believed to play a role in multiple membrane trafficking pathways: PI3KC3-C1 is involved in initiation of autophagosomes and PI3KC3-C2 in maturation of autophagosomes and endocytosis. Involved in regulation of degradative endocytic trafficking and required for the abscission step in cytokinesis, probably in the context of PI3KC3-C2. Essential for the formation of PI3KC3-C2 but not PI3KC3-C1 PI3K complex forms. Involved in endocytosis. May play a role in antiviral host defense. Functionally, beclin-1-C 35 kDa localized to mitochondria can promote apoptosis; it induces the mitochondrial translocation of BAX and the release of proapoptotic factors. The chain is Beclin-1 (Becn1) from Rattus norvegicus (Rat).